The chain runs to 361 residues: Phospho-N-acetylmuramoyl-pentapeptide-transferase (361 aa).

10 helical membrane passes run Gly-27–Leu-47, Thr-72–Ala-92, Val-99–Leu-119, Leu-135–Ala-155, Ala-169–Gly-189, Gly-200–Val-220, Leu-240–Pro-260, Ile-264–Ala-284, Ile-289–Val-309, and Gln-338–Leu-358.

The protein belongs to the glycosyltransferase 4 family. MraY subfamily. Mg(2+) serves as cofactor.

The protein resides in the cell inner membrane. The enzyme catalyses UDP-N-acetyl-alpha-D-muramoyl-L-alanyl-gamma-D-glutamyl-meso-2,6-diaminopimeloyl-D-alanyl-D-alanine + di-trans,octa-cis-undecaprenyl phosphate = di-trans,octa-cis-undecaprenyl diphospho-N-acetyl-alpha-D-muramoyl-L-alanyl-D-glutamyl-meso-2,6-diaminopimeloyl-D-alanyl-D-alanine + UMP. It functions in the pathway cell wall biogenesis; peptidoglycan biosynthesis. Its function is as follows. Catalyzes the initial step of the lipid cycle reactions in the biosynthesis of the cell wall peptidoglycan: transfers peptidoglycan precursor phospho-MurNAc-pentapeptide from UDP-MurNAc-pentapeptide onto the lipid carrier undecaprenyl phosphate, yielding undecaprenyl-pyrophosphoryl-MurNAc-pentapeptide, known as lipid I. The chain is Phospho-N-acetylmuramoyl-pentapeptide-transferase from Methylobacterium radiotolerans (strain ATCC 27329 / DSM 1819 / JCM 2831 / NBRC 15690 / NCIMB 10815 / 0-1).